The chain runs to 140 residues: Large ribosomal subunit protein uL16 (140 aa).

The protein belongs to the universal ribosomal protein uL16 family. As to quaternary structure, part of the 50S ribosomal subunit.

Binds 23S rRNA and is also seen to make contacts with the A and possibly P site tRNAs. This is Large ribosomal subunit protein uL16 from Syntrophus aciditrophicus (strain SB).